Consider the following 492-residue polypeptide: Malonyl-CoA decarboxylase, mitochondrial (492 aa).

A mitochondrion-targeting transit peptide spans 1 to 38 (MRGLGPSLRARRLLPLRYPPRPPGPRGPRLCSGLTASA). The tract at residues 39–189 (MDELLRRAVP…VLKSMLSEWF (151 aa)) is alpha-helical domain. Position 58 is an N6-acetyllysine (Lys-58). Lys-167 carries the N6-acetyllysine; alternate modification. The residue at position 167 (Lys-167) is an N6-succinyllysine; alternate. The catalytic domain stretch occupies residues 190-492 (SSGFLNLERV…VAQFQSNSKL (303 aa)). Position 210 is an N6-acetyllysine (Lys-210). Residue Lys-221 is modified to N6-succinyllysine. 298–304 (QGVELGT) contacts malonyl-CoA. At Lys-316 the chain carries N6-acetyllysine. Residue Ser-328 participates in malonyl-CoA binding. Catalysis depends on Ser-328, which acts as the Proton acceptor. Lys-385 is subject to N6-acetyllysine; alternate. Lys-385 is subject to N6-succinyllysine; alternate. The residue at position 388 (Lys-388) is an N6-acetyllysine. His-422 serves as a coordination point for malonyl-CoA. His-422 acts as the Proton donor in catalysis. Lys-441 and Lys-471 each carry N6-acetyllysine. A Microbody targeting signal motif is present at residues 490–492 (SKL).

As to quaternary structure, homotetramer. Dimer of dimers. The two subunits within a dimer display conformational differences suggesting that at any given moment, only one of the two subunits is competent for malonyl-CoA binding and catalytic activity. Under oxidizing conditions, can form disulfide-linked homotetramers (in vitro). Associates with the peroxisomal targeting signal receptor PEX5. Post-translationally, acetylation at Lys-471 activates malonyl-CoA decarboxylase activity. Deacetylation at Lys-471 by SIRT4 represses activity, leading to promote lipogenesis. In terms of processing, interchain disulfide bonds may form in peroxisomes (Potential). Interchain disulfide bonds are not expected to form in the reducing environment of the cytoplasm and mitochondria. As to expression, expressed in liver, heart, skeletal muscles and adipose tissues (at protein level). Ubiquitous. Strongly expressed in liver, kidney, heart, skeletal muscle and adipose tissues. Weakly expressed in brain.

It is found in the cytoplasm. It localises to the mitochondrion matrix. The protein localises to the peroxisome. Its subcellular location is the peroxisome matrix. The catalysed reaction is malonyl-CoA + H(+) = acetyl-CoA + CO2. It participates in metabolic intermediate biosynthesis; acetyl-CoA biosynthesis; acetyl-CoA from malonyl-CoA: step 1/1. Its activity is regulated as follows. Malonyl-CoA decarboxylase activity does not require any cofactors or divalent metal ions. Its function is as follows. Catalyzes the conversion of malonyl-CoA to acetyl-CoA. In the fatty acid biosynthesis MCD selectively removes malonyl-CoA and thus assures that methyl-malonyl-CoA is the only chain elongating substrate for fatty acid synthase and that fatty acids with multiple methyl side chains are produced. In peroxisomes it may be involved in degrading intraperoxisomal malonyl-CoA, which is generated by the peroxisomal beta-oxidation of odd chain-length dicarboxylic fatty acids. Plays a role in the metabolic balance between glucose and lipid oxidation in muscle independent of alterations in insulin signaling. May play a role in controlling the extent of ischemic injury by promoting glucose oxidation. This chain is Malonyl-CoA decarboxylase, mitochondrial, found in Rattus norvegicus (Rat).